The following is a 409-amino-acid chain: Tyrosine--tRNA ligase (409 aa).

The short motif at 54-63 is the 'HIGH' region element; it reads PTAPDIHLGH. Positions 238–242 match the 'KMSKS' region motif; that stretch reads KMSKS. K241 contributes to the ATP binding site. Residues 347-407 enclose the S4 RNA-binding domain; sequence MGILHVLRAS…GKRKFARVNL (61 aa).

This sequence belongs to the class-I aminoacyl-tRNA synthetase family. TyrS type 2 subfamily. As to quaternary structure, homodimer.

The protein localises to the cytoplasm. It catalyses the reaction tRNA(Tyr) + L-tyrosine + ATP = L-tyrosyl-tRNA(Tyr) + AMP + diphosphate + H(+). Functionally, catalyzes the attachment of tyrosine to tRNA(Tyr) in a two-step reaction: tyrosine is first activated by ATP to form Tyr-AMP and then transferred to the acceptor end of tRNA(Tyr). This Bordetella avium (strain 197N) protein is Tyrosine--tRNA ligase.